The chain runs to 170 residues: 3-isopropylmalate dehydratase small subunit 1 (170 aa).

This sequence belongs to the LeuD family. LeuD type 2 subfamily. As to quaternary structure, heterodimer of LeuC and LeuD.

It catalyses the reaction (2R,3S)-3-isopropylmalate = (2S)-2-isopropylmalate. It functions in the pathway amino-acid biosynthesis; L-leucine biosynthesis; L-leucine from 3-methyl-2-oxobutanoate: step 2/4. In terms of biological role, catalyzes the isomerization between 2-isopropylmalate and 3-isopropylmalate, via the formation of 2-isopropylmaleate. The polypeptide is 3-isopropylmalate dehydratase small subunit 1 (leuD1) (Methanopyrus kandleri (strain AV19 / DSM 6324 / JCM 9639 / NBRC 100938)).